The sequence spans 234 residues: GTP-binding protein ypt4 (234 aa).

16–23 (GPSGTGKS) serves as a coordination point for GTP. The short motif at 39–47 (SHTVGIDFA) is the Effector region element. 68–72 (DTAGQ) contacts GTP. S-geranylgeranyl cysteine attachment occurs at residues Cys233 and Cys234.

It belongs to the small GTPase superfamily. Rab family.

It localises to the cell membrane. The sequence is that of GTP-binding protein ypt4 (ypt4) from Schizosaccharomyces pombe (strain 972 / ATCC 24843) (Fission yeast).